The primary structure comprises 79 residues: Cytochrome b (79 aa).

The next 3 helical transmembrane spans lie at 1-7 (TALFLAM), 31-52 (WLIRNMHANGASFLFICIYLHI), and 67-79 (WNIGVILLLLTMM). H37 and H51 together coordinate heme b.

Belongs to the cytochrome b family. The cytochrome bc1 complex contains 3 respiratory subunits (MT-CYB, CYC1 and UQCRFS1), 2 core proteins (UQCRC1 and UQCRC2) and probably 6 low-molecular weight proteins. Heme b serves as cofactor.

The protein localises to the mitochondrion inner membrane. Functionally, component of the ubiquinol-cytochrome c reductase complex (complex III or cytochrome b-c1 complex) that is part of the mitochondrial respiratory chain. The b-c1 complex mediates electron transfer from ubiquinol to cytochrome c. Contributes to the generation of a proton gradient across the mitochondrial membrane that is then used for ATP synthesis. This is Cytochrome b (mt-cyb) from Julidochromis regani (Convict julie).